Consider the following 264-residue polypeptide: Tropomyosin Cha f 1.0101 (264 aa).

Residue methionine 1 is modified to N-acetylmethionine. Disordered regions lie at residues 1-56 (MDAI…VENE) and 92-126 (IQLP…SERM). A coiled-coil region spans residues 1-264 (MDAIKKKMQA…RLEDELVNEK (264 aa)). Basic and acidic residues predominate over residues 12–45 (KLEKDNAMDRADTLEQQNKEANLRAEKTEEEIRA).

Belongs to the tropomyosin family. As to quaternary structure, homodimer. As to expression, expressed in muscle (at protein level). Expressed in claw muscles.

In terms of biological role, tropomyosin, in association with the troponin complex, plays a central role in the calcium dependent regulation of muscle contraction. The polypeptide is Tropomyosin Cha f 1.0101 (Charybdis feriata (Crucifix crab)).